Here is an 802-residue protein sequence, read N- to C-terminus: Oligophrenin-1 (802 aa).

In terms of domain architecture, PH spans 265-368; that stretch reads QPTIEGYLYT…WMEAMDGKEP (104 aa). The Rho-GAP domain maps to 380–564; the sequence is MELNEVGFKF…ILIEHFGKIY (185 aa). 3 disordered regions span residues 569–589, 607–770, and 783–802; these read EESA…HKPI, LDES…NAGE, and FETA…GDES. Polar residues predominate over residues 616–627; that stretch reads HQTPNGTITSSI. Over residues 716 to 732 the composition is skewed to basic and acidic residues; the sequence is HHKEGDADSFSKVRPPG.

In terms of assembly, interacts with HOMER1. Interacts with AMPA receptor complexes. Interacts with SH3GL2 (endophilin-A1). Interacts (via C-terminus) with NR1D1.

The protein resides in the postsynapse. It localises to the presynapse. It is found in the cell projection. Its subcellular location is the axon. The protein localises to the dendritic spine. The protein resides in the dendrite. It localises to the cytoplasm. Its function is as follows. Stimulates GTP hydrolysis of members of the Rho family. Its action on RHOA activity and signaling is implicated in growth and stabilization of dendritic spines, and therefore in synaptic function. Critical for the stabilization of AMPA receptors at postsynaptic sites. Critical for the regulation of synaptic vesicle endocytosis at pre-synaptic terminals. Required for the localization of NR1D1 to dendrites, can suppress its repressor activity and protect it from proteasomal degradation. This is Oligophrenin-1 (OPHN1) from Pan troglodytes (Chimpanzee).